The following is a 393-amino-acid chain: Methylthioribose kinase (393 aa).

Residues N38, K53, and 107 to 109 (EDL) contribute to the ATP site. D225 lines the substrate pocket. 242–244 (DPE) contributes to the ATP binding site. R332 lines the substrate pocket.

This sequence belongs to the methylthioribose kinase family. Homodimer.

It carries out the reaction 5-(methylsulfanyl)-D-ribose + ATP = 5-(methylsulfanyl)-alpha-D-ribose 1-phosphate + ADP + H(+). It participates in amino-acid biosynthesis; L-methionine biosynthesis via salvage pathway; S-methyl-5-thio-alpha-D-ribose 1-phosphate from S-methyl-5'-thioadenosine (hydrolase route): step 2/2. In terms of biological role, catalyzes the phosphorylation of methylthioribose into methylthioribose-1-phosphate. This chain is Methylthioribose kinase, found in Bacillus cereus (strain AH187).